The sequence spans 119 residues: Holo-[acyl-carrier-protein] synthase (119 aa).

Residues D8 and E59 each coordinate Mg(2+).

The protein belongs to the P-Pant transferase superfamily. AcpS family. The cofactor is Mg(2+).

It is found in the cytoplasm. The catalysed reaction is apo-[ACP] + CoA = holo-[ACP] + adenosine 3',5'-bisphosphate + H(+). Transfers the 4'-phosphopantetheine moiety from coenzyme A to a Ser of acyl-carrier-protein. The chain is Holo-[acyl-carrier-protein] synthase from Staphylococcus aureus (strain USA300).